Here is a 370-residue protein sequence, read N- to C-terminus: 3-dehydroquinate synthase (370 aa).

NAD(+) is bound by residues 108 to 112 (GVIGD), 132 to 133 (TT), Lys-145, and Lys-154. Zn(2+) is bound by residues Glu-187, His-249, and His-267.

The protein belongs to the sugar phosphate cyclases superfamily. Dehydroquinate synthase family. Co(2+) serves as cofactor. The cofactor is Zn(2+). It depends on NAD(+) as a cofactor.

The protein localises to the cytoplasm. It carries out the reaction 7-phospho-2-dehydro-3-deoxy-D-arabino-heptonate = 3-dehydroquinate + phosphate. The protein operates within metabolic intermediate biosynthesis; chorismate biosynthesis; chorismate from D-erythrose 4-phosphate and phosphoenolpyruvate: step 2/7. Its function is as follows. Catalyzes the conversion of 3-deoxy-D-arabino-heptulosonate 7-phosphate (DAHP) to dehydroquinate (DHQ). In Cereibacter sphaeroides (strain ATCC 17029 / ATH 2.4.9) (Rhodobacter sphaeroides), this protein is 3-dehydroquinate synthase.